A 344-amino-acid polypeptide reads, in one-letter code: 2,3,4,5-tetrahydropyridine-2,6-dicarboxylate N-succinyltransferase (344 aa).

Mg(2+) is bound at residue Glu205. Glu221 functions as the Acyl-anhydride intermediate in the catalytic mechanism. Residues Arg223, Gly238, Ser241, Ala264, 279 to 280 (EA), 287 to 289 (GTK), Lys304, and 317 to 320 (RRNS) contribute to the succinyl-CoA site.

Belongs to the type 2 tetrahydrodipicolinate N-succinyltransferase family. In terms of assembly, homotrimer. Magnesium ions are not essential for catalysis. is required as a cofactor.

Its subcellular location is the cytoplasm. It carries out the reaction (S)-2,3,4,5-tetrahydrodipicolinate + succinyl-CoA + H2O = (S)-2-succinylamino-6-oxoheptanedioate + CoA. It functions in the pathway amino-acid biosynthesis; L-lysine biosynthesis via DAP pathway; LL-2,6-diaminopimelate from (S)-tetrahydrodipicolinate (succinylase route): step 1/3. Its activity is regulated as follows. Weakly inhibited by D-2-aminopimelate. Its function is as follows. Catalyzes the conversion of the cyclic tetrahydrodipicolinate (THDP) into the acyclic N-succinyl-L-2-amino-6-oxopimelate using succinyl-CoA. Displays succinyl transferase activity with L-2-aminopimelate and succinyl-CoA as substrates. The sequence is that of 2,3,4,5-tetrahydropyridine-2,6-dicarboxylate N-succinyltransferase from Pseudomonas aeruginosa (strain ATCC 15692 / DSM 22644 / CIP 104116 / JCM 14847 / LMG 12228 / 1C / PRS 101 / PAO1).